The primary structure comprises 389 residues: MSDIAPVTNTPYIPPTPEVGLPLWLLAELTYRCPLQCPYCSNPLDFAKQGQELTTEQWFKVMQEAREMGAAQIGFSGGEPLVRQDLAELIAEARRLGFYTNLITSGIGLTKEKIIAFKEAGLDHIQISFQASDEQVNNMLAGSKKAFAQKLEMAKAVKKHGYPMVLNFVTHRHNIDRIDKIIELCLALEADFVELATCQFYGWAHLNRLGLLPTKDQLVRAEAVTNEYRVRLEAENHPCKLIFVTPDYYEERPKACMNGWGNIFLTVTPDGTALPCHGARQMPIQFPNVRDYSMQHIWYDSFGFNRFRGYDWMPEPCRSCDEKEKDFGGCRCQAFMLTGDAANADPVCSKSYHHGIITQARDESETATQTIEELAFRNDRNSRLIAKSS.

Residues 19–235 (VGLPLWLLAE…NEYRVRLEAE (217 aa)) enclose the Radical SAM core domain. Residues C33, C37, and C40 each coordinate [4Fe-4S] cluster.

It belongs to the radical SAM superfamily. PqqE family. In terms of assembly, interacts with PqqD. The interaction is necessary for activity of PqqE. It depends on [4Fe-4S] cluster as a cofactor.

It carries out the reaction [PQQ precursor protein] + S-adenosyl-L-methionine = E-Y cross-linked-[PQQ precursor protein] + 5'-deoxyadenosine + L-methionine + H(+). It participates in cofactor biosynthesis; pyrroloquinoline quinone biosynthesis. Its function is as follows. Catalyzes the cross-linking of a glutamate residue and a tyrosine residue in the PqqA protein as part of the biosynthesis of pyrroloquinoline quinone (PQQ). The protein is PqqA peptide cyclase of Pseudomonas savastanoi pv. phaseolicola (strain 1448A / Race 6) (Pseudomonas syringae pv. phaseolicola (strain 1448A / Race 6)).